Reading from the N-terminus, the 312-residue chain is Prephenate dehydratase (312 aa).

Residues 3–194 (GIAYLGPEGT…ARTRFVLVGR (192 aa)) form the Prephenate dehydratase domain. An ACT domain is found at 208 to 285 (SVVLQLDNVP…ADVRYLGSWP (78 aa)). A disordered region spans residues 291 to 312 (GAAPPPMDESASWLEGLREGRP).

In terms of assembly, homodimer.

It catalyses the reaction prephenate + H(+) = 3-phenylpyruvate + CO2 + H2O. Its pathway is amino-acid biosynthesis; L-phenylalanine biosynthesis; phenylpyruvate from prephenate: step 1/1. The sequence is that of Prephenate dehydratase (pheA) from Mycolicibacterium vanbaalenii (strain DSM 7251 / JCM 13017 / BCRC 16820 / KCTC 9966 / NRRL B-24157 / PYR-1) (Mycobacterium vanbaalenii).